We begin with the raw amino-acid sequence, 1399 residues long: DNA-directed RNA polymerase subunit beta' (1399 aa).

C71, C73, C86, and C89 together coordinate Zn(2+). D462, D464, and D466 together coordinate Mg(2+). C810, C884, C891, and C894 together coordinate Zn(2+).

Belongs to the RNA polymerase beta' chain family. In terms of assembly, the RNAP catalytic core consists of 2 alpha, 1 beta, 1 beta' and 1 omega subunit. When a sigma factor is associated with the core the holoenzyme is formed, which can initiate transcription. The cofactor is Mg(2+). Zn(2+) is required as a cofactor.

The catalysed reaction is RNA(n) + a ribonucleoside 5'-triphosphate = RNA(n+1) + diphosphate. Functionally, DNA-dependent RNA polymerase catalyzes the transcription of DNA into RNA using the four ribonucleoside triphosphates as substrates. The sequence is that of DNA-directed RNA polymerase subunit beta' from Chelativorans sp. (strain BNC1).